Here is a 79-residue protein sequence, read N- to C-terminus: Acyl carrier protein (79 aa).

The 76-residue stretch at 2–77 folds into the Carrier domain; the sequence is SDVAERVKKI…DAIDFIKANA (76 aa). An O-(pantetheine 4'-phosphoryl)serine modification is found at serine 37.

The protein belongs to the acyl carrier protein (ACP) family. Post-translationally, 4'-phosphopantetheine is transferred from CoA to a specific serine of apo-ACP by AcpS. This modification is essential for activity because fatty acids are bound in thioester linkage to the sulfhydryl of the prosthetic group.

The protein localises to the cytoplasm. Its pathway is lipid metabolism; fatty acid biosynthesis. Carrier of the growing fatty acid chain in fatty acid biosynthesis. The polypeptide is Acyl carrier protein (Azospirillum brasilense).